Reading from the N-terminus, the 660-residue chain is DNA mismatch repair protein MutL (660 aa).

The protein belongs to the DNA mismatch repair MutL/HexB family.

Its function is as follows. This protein is involved in the repair of mismatches in DNA. It is required for dam-dependent methyl-directed DNA mismatch repair. May act as a 'molecular matchmaker', a protein that promotes the formation of a stable complex between two or more DNA-binding proteins in an ATP-dependent manner without itself being part of a final effector complex. This is DNA mismatch repair protein MutL from Streptococcus pyogenes serotype M1.